The sequence spans 535 residues: MAKKKERAVNVSGKPRHSLDVNRANDKKGAGGGAGGGGGGRSAATVRRLKMYKMRPLRDRGGKILKHDLQSKELPNTRIEPDRRWFGNTRVVNQKELEFFREELQSRLSNNYNVILKERKLPLSLLQDHQKQARAHLLDTEPFEHAFGPKGKRKRPKLMALDYESLLKKADDSQGAFEDKHATAKLLKEEEEDGLRDLVRHTMFEKGQSKRIWGELYKVIDSSDVVVQVLDARDPMGTRCYHLEKHLKENAKHKHLVFLLNKCDLVPAWATKGWLRTLSKDYPTLAFHASINSSFGKGSLLSVLRQFARLKSDKQAISVGFVGYPNVGKSSVINTLRSKSVCKVAPIPGETKVWQYITLTKRIFLIDCPGVVYQNNDSETDIVLKGVVRVTNLADASEHIGEVLRRVKKEHLKRAYKIEDWVDDNDFLVQLSKTTGKLLRGGEPDLTTTAKMVLHDWQRGKIPFFVPPPQQGEDSPSETAEPVEKSDEEGVSSDRTAAAMKAIAGIISSQQQMNVPCQKEFGVTNEDSEVAEQSE.

Residues M1–S42 form a disordered region. Residues H17–G29 show a composition bias toward basic and acidic residues. Residues A30–R41 are compositionally biased toward gly residues. The CP-type G domain maps to W213–Q374. The segment at N261–D264 is G4. Positions S290–N292 are G5. Residues G323–S330 form a G1 region. The segment at G349–V353 is G2. Residues D367–G370 are G3. The tract at residues F464–D494 is disordered.

Belongs to the TRAFAC class YlqF/YawG GTPase family. RsgA subfamily. Interacts (via N-terminus) with the 60S ribosomal proteins RPL10A. This interaction is enhanced by the addition of GTP. In terms of tissue distribution, expressed in roots, shoot apical meristem, leaves, leaf sheaths and flowers.

Its subcellular location is the nucleus. The protein resides in the nucleolus. Its activity is regulated as follows. The GTPase activity is stimulated in the presence of ribosomes, particularly of the 60S subunit. Its function is as follows. GTPase involved in pre-60S ribosomal subunit maturation. This is Nuclear/nucleolar GTPase 2 from Oryza sativa subsp. japonica (Rice).